Consider the following 410-residue polypeptide: Protein king tubby 2 (410 aa).

A compositionally biased stretch (polar residues) spans 48–72 (SPNNPDQILTSTGNASITTTPTSPY). Disordered regions lie at residues 48–109 (SPNN…STRH) and 121–159 (ISPA…EGDV). The span at 132-143 (SHHDSSSGKSVE) shows a compositional bias: basic and acidic residues.

Belongs to the TUB family.

The protein localises to the cytoplasm. It is found in the nucleus. The polypeptide is Protein king tubby 2 (king-tubby2) (Aedes aegypti (Yellowfever mosquito)).